A 147-amino-acid chain; its full sequence is Transcriptional regulator MraZ (147 aa).

2 consecutive SpoVT-AbrB domains span residues 5-50 (AVAL…PLTA) and 79-122 (AQEE…SDAG).

This sequence belongs to the MraZ family. As to quaternary structure, forms oligomers.

The protein resides in the cytoplasm. Its subcellular location is the nucleoid. This chain is Transcriptional regulator MraZ, found in Azoarcus sp. (strain BH72).